The primary structure comprises 123 residues: Pre-B lymphocyte protein 3 (123 aa).

The signal sequence occupies residues 1 to 20; that stretch reads MACRCLSFLLMGTFLSVSQT. The Ig-like domain occupies 21–123; it reads VLAQLDALLV…YCSVGYGFSP (103 aa). Cys-40 and Cys-115 form a disulfide bridge.

The protein belongs to the immunoglobulin superfamily. Expressed in B-cell precursors. Expressed in fetal liver, bone marrow, spleen and lymph node.

Functionally, associates with the Ig-mu chain to form a molecular complex that is expressed on the surface of pre-B-cells. The protein is Pre-B lymphocyte protein 3 (VPREB3) of Homo sapiens (Human).